The primary structure comprises 216 residues: Small ribosomal subunit protein uS3c (216 aa).

The KH type-2 domain maps to 43–116 (IKNYVQKNMR…RLNIAITRVA (74 aa)).

The protein belongs to the universal ribosomal protein uS3 family. As to quaternary structure, part of the 30S ribosomal subunit.

Its subcellular location is the plastid. The protein resides in the chloroplast. This chain is Small ribosomal subunit protein uS3c (rps3), found in Drimys granadensis.